The following is an 819-amino-acid chain: Proteome of basal body protein 15 (819 aa).

2 stretches are compositionally biased toward low complexity: residues 46–59 (PASS…NPGR) and 572–581 (RQQQQQQQHT). Disordered stretches follow at residues 46–72 (PASS…LATG) and 564–590 (ERQR…GGGV). Residues 546–580 (YVVLREAVARVQARMEQQERQRRLLERQQQQQQQH) adopt a coiled-coil conformation.

It is found in the cytoplasm. Its subcellular location is the cytoskeleton. The protein localises to the microtubule organizing center. The protein resides in the centrosome. It localises to the centriole. The polypeptide is Proteome of basal body protein 15 (Chlamydomonas reinhardtii (Chlamydomonas smithii)).